We begin with the raw amino-acid sequence, 100 residues long: NADH-quinone oxidoreductase subunit K (100 aa).

The next 3 helical transmembrane spans lie at 4–24 (TTWVIILSFLLFAIGTFGLLS), 28–48 (LLFILLSLEIMLNGIILLFIA), and 60–80 (IMYLLVLTLAASEVAVGLALV).

The protein belongs to the complex I subunit 4L family. As to quaternary structure, NDH-1 is composed of 13 different subunits. Subunits NuoA, H, J, K, L, M, N constitute the membrane sector of the complex.

Its subcellular location is the cell inner membrane. The catalysed reaction is a quinone + NADH + 5 H(+)(in) = a quinol + NAD(+) + 4 H(+)(out). Functionally, NDH-1 shuttles electrons from NADH, via FMN and iron-sulfur (Fe-S) centers, to quinones in the respiratory chain. The immediate electron acceptor for the enzyme in this species is believed to be ubiquinone. Couples the redox reaction to proton translocation (for every two electrons transferred, four hydrogen ions are translocated across the cytoplasmic membrane), and thus conserves the redox energy in a proton gradient. The chain is NADH-quinone oxidoreductase subunit K from Shewanella woodyi (strain ATCC 51908 / MS32).